The chain runs to 288 residues: Nucleotide-binding protein PM0169 (288 aa).

8 to 15 (GHSGAGKS) provides a ligand contact to ATP. Residue 56–59 (DIRN) participates in GTP binding.

The protein belongs to the RapZ-like family.

Displays ATPase and GTPase activities. The polypeptide is Nucleotide-binding protein PM0169 (Pasteurella multocida (strain Pm70)).